We begin with the raw amino-acid sequence, 104 residues long: Cytochrome c-552 (104 aa).

An N-terminal signal peptide occupies residues 1 to 23 (MHLHLRGICLVLAVASSSSSALA). The heme c site is built by Cys-37, Cys-40, His-41, and Met-82.

The protein belongs to the cytochrome c family. As to quaternary structure, monoheme monomer. Has the tendency to dimerize. In terms of processing, binds 1 heme c group covalently per subunit.

It is found in the periplasm. The chain is Cytochrome c-552 (cycB) from Bradyrhizobium diazoefficiens (strain JCM 10833 / BCRC 13528 / IAM 13628 / NBRC 14792 / USDA 110).